We begin with the raw amino-acid sequence, 134 residues long: Arginine decarboxylase proenzyme (134 aa).

The active-site Schiff-base intermediate with substrate; via pyruvic acid is Ser-82. Pyruvic acid (Ser); by autocatalysis is present on Ser-82. His-87 acts as the Proton acceptor; for processing activity in catalysis. Cys-102 (proton donor; for catalytic activity) is an active-site residue.

This sequence belongs to the prokaryotic AdoMetDC family. Type 1 subfamily. Heterooctamer of four alpha and four beta chains arranged as a tetramer of alpha/beta heterodimers. Pyruvate is required as a cofactor. In terms of processing, is synthesized initially as an inactive proenzyme. Formation of the active enzyme involves a self-maturation process in which the active site pyruvoyl group is generated from an internal serine residue via an autocatalytic post-translational modification. Two non-identical subunits are generated from the proenzyme in this reaction, and the pyruvate is formed at the N-terminus of the alpha chain, which is derived from the carboxyl end of the proenzyme. The post-translation cleavage follows an unusual pathway, termed non-hydrolytic serinolysis, in which the side chain hydroxyl group of the serine supplies its oxygen atom to form the C-terminus of the beta chain, while the remainder of the serine residue undergoes an oxidative deamination to produce ammonia and the pyruvoyl group blocking the N-terminus of the alpha chain.

The catalysed reaction is L-arginine + H(+) = agmatine + CO2. It participates in amine and polyamine biosynthesis; agmatine biosynthesis; agmatine from L-arginine: step 1/1. With respect to regulation, highly competitively inhibited by L-argininamide and L-arginine methyl ester. Also inhibited by alpha-difluoromethylarginine. Is not stimulated by potassium chloride as observed for other decarboxylases. Functionally, specifically catalyzes the decarboxylation of L-arginine to agmatine. Is also able to decarboxylate L-canavanine, although less efficiently. Has no S-adenosylmethionine decarboxylase (AdoMetDC) activity. This Saccharolobus solfataricus (strain ATCC 35092 / DSM 1617 / JCM 11322 / P2) (Sulfolobus solfataricus) protein is Arginine decarboxylase proenzyme.